The primary structure comprises 172 residues: MDLKQYVSEVQDWPKPGVSFKDITTIMDNGEAYGYATDKIVEYAKDRDVDIVVGPEARGFIIGCPVAYSMGIGFAPVRKEGKLPREVIRYEYDLEYGTNVLTMHKDAIKPGQRVLITDDLLATGGTIEAAIKLVEKLGGIVVGIAFIIELKYLNGIEKIKDYDVMSLISYDE.

Belongs to the purine/pyrimidine phosphoribosyltransferase family. As to quaternary structure, homodimer.

The protein resides in the cytoplasm. It catalyses the reaction AMP + diphosphate = 5-phospho-alpha-D-ribose 1-diphosphate + adenine. Its pathway is purine metabolism; AMP biosynthesis via salvage pathway; AMP from adenine: step 1/1. Its function is as follows. Catalyzes a salvage reaction resulting in the formation of AMP, that is energically less costly than de novo synthesis. The protein is Adenine phosphoribosyltransferase of Staphylococcus aureus (strain Mu3 / ATCC 700698).